A 212-amino-acid polypeptide reads, in one-letter code: Cytidylate kinase (212 aa).

9 to 17 (GPAAAGKGT) provides a ligand contact to ATP.

The protein belongs to the cytidylate kinase family. Type 1 subfamily.

Its subcellular location is the cytoplasm. The enzyme catalyses CMP + ATP = CDP + ADP. The catalysed reaction is dCMP + ATP = dCDP + ADP. The protein is Cytidylate kinase of Rhizobium meliloti (strain 1021) (Ensifer meliloti).